We begin with the raw amino-acid sequence, 244 residues long: 1-(5-phosphoribosyl)-5-[(5-phosphoribosylamino)methylideneamino] imidazole-4-carboxamide isomerase (244 aa).

Residue Asp8 is the Proton acceptor of the active site. The active-site Proton donor is the Asp129.

It belongs to the HisA/HisF family.

It localises to the cytoplasm. It carries out the reaction 1-(5-phospho-beta-D-ribosyl)-5-[(5-phospho-beta-D-ribosylamino)methylideneamino]imidazole-4-carboxamide = 5-[(5-phospho-1-deoxy-D-ribulos-1-ylimino)methylamino]-1-(5-phospho-beta-D-ribosyl)imidazole-4-carboxamide. It functions in the pathway amino-acid biosynthesis; L-histidine biosynthesis; L-histidine from 5-phospho-alpha-D-ribose 1-diphosphate: step 4/9. The sequence is that of 1-(5-phosphoribosyl)-5-[(5-phosphoribosylamino)methylideneamino] imidazole-4-carboxamide isomerase from Chelativorans sp. (strain BNC1).